Here is a 378-residue protein sequence, read N- to C-terminus: Non-functional pseudokinase ZRK6 (378 aa).

The Protein kinase domain occupies 34-378 (DGKCNPIKNF…SNNRSQMSSI (345 aa)). ATP-binding positions include 40–48 (IKNFSYDQI) and Lys-83.

It belongs to the protein kinase superfamily. Ser/Thr protein kinase family. ZRK subfamily. Interacts with RPP13L4/ZAR1.

This Arabidopsis thaliana (Mouse-ear cress) protein is Non-functional pseudokinase ZRK6.